A 366-amino-acid polypeptide reads, in one-letter code: Chorismate synthase (366 aa).

R48 contributes to the NADP(+) binding site. FMN is bound by residues R125–S127, N241–A242, G285, K300–S304, and R326.

The protein belongs to the chorismate synthase family. In terms of assembly, homotetramer. The cofactor is FMNH2.

It carries out the reaction 5-O-(1-carboxyvinyl)-3-phosphoshikimate = chorismate + phosphate. Its pathway is metabolic intermediate biosynthesis; chorismate biosynthesis; chorismate from D-erythrose 4-phosphate and phosphoenolpyruvate: step 7/7. Catalyzes the anti-1,4-elimination of the C-3 phosphate and the C-6 proR hydrogen from 5-enolpyruvylshikimate-3-phosphate (EPSP) to yield chorismate, which is the branch point compound that serves as the starting substrate for the three terminal pathways of aromatic amino acid biosynthesis. This reaction introduces a second double bond into the aromatic ring system. The sequence is that of Chorismate synthase from Paracoccus denitrificans (strain Pd 1222).